Consider the following 367-residue polypeptide: Outer membrane protein P2 (367 aa).

An N-terminal signal peptide occupies residues 1-20 (MKKTLAALIVGAFAASAANA).

This sequence belongs to the Gram-negative porin family. In terms of assembly, homotrimer.

It is found in the cell outer membrane. Forms pores that allow passive diffusion of small molecules across the outer membrane. This is Outer membrane protein P2 (ompP2) from Haemophilus influenzae.